Consider the following 207-residue polypeptide: Thiamine-phosphate synthase (207 aa).

4-amino-2-methyl-5-(diphosphooxymethyl)pyrimidine contacts are provided by residues Gln36 to Lys40 and Asn68. Positions 69 and 88 each coordinate Mg(2+). Ser106 is a 4-amino-2-methyl-5-(diphosphooxymethyl)pyrimidine binding site. Thr132–Thr134 contacts 2-[(2R,5Z)-2-carboxy-4-methylthiazol-5(2H)-ylidene]ethyl phosphate. Lys135 is a binding site for 4-amino-2-methyl-5-(diphosphooxymethyl)pyrimidine. Residues Gly162 and Val182–Ser183 contribute to the 2-[(2R,5Z)-2-carboxy-4-methylthiazol-5(2H)-ylidene]ethyl phosphate site.

This sequence belongs to the thiamine-phosphate synthase family. Requires Mg(2+) as cofactor.

It catalyses the reaction 2-[(2R,5Z)-2-carboxy-4-methylthiazol-5(2H)-ylidene]ethyl phosphate + 4-amino-2-methyl-5-(diphosphooxymethyl)pyrimidine + 2 H(+) = thiamine phosphate + CO2 + diphosphate. The enzyme catalyses 2-(2-carboxy-4-methylthiazol-5-yl)ethyl phosphate + 4-amino-2-methyl-5-(diphosphooxymethyl)pyrimidine + 2 H(+) = thiamine phosphate + CO2 + diphosphate. It carries out the reaction 4-methyl-5-(2-phosphooxyethyl)-thiazole + 4-amino-2-methyl-5-(diphosphooxymethyl)pyrimidine + H(+) = thiamine phosphate + diphosphate. It functions in the pathway cofactor biosynthesis; thiamine diphosphate biosynthesis; thiamine phosphate from 4-amino-2-methyl-5-diphosphomethylpyrimidine and 4-methyl-5-(2-phosphoethyl)-thiazole: step 1/1. Functionally, condenses 4-methyl-5-(beta-hydroxyethyl)thiazole monophosphate (THZ-P) and 2-methyl-4-amino-5-hydroxymethyl pyrimidine pyrophosphate (HMP-PP) to form thiamine monophosphate (TMP). The protein is Thiamine-phosphate synthase of Methanococcus maripaludis (strain C6 / ATCC BAA-1332).